Consider the following 120-residue polypeptide: Protein GP96 (120 aa).

It belongs to the herpesviridae UL96 family.

This Cavia porcellus (Guinea pig) protein is Protein GP96.